Consider the following 354-residue polypeptide: Holliday junction branch migration complex subunit RuvB (354 aa).

The large ATPase domain (RuvB-L) stretch occupies residues 4–191 (TDKLAAPARV…FGIVARLEFY (188 aa)). ATP is bound by residues L30, R31, G72, K75, T76, T77, 138 to 140 (EDY), R181, Y191, and R228. A Mg(2+)-binding site is contributed by T76. Positions 192–262 (TAEELARIVT…MADAALAMLD (71 aa)) are small ATPAse domain (RuvB-S). A head domain (RuvB-H) region spans residues 265 to 354 (RVGFDLMDRK…GDAGELFGDA (90 aa)). Residues R301, R320, and R325 each contribute to the DNA site.

It belongs to the RuvB family. Homohexamer. Forms an RuvA(8)-RuvB(12)-Holliday junction (HJ) complex. HJ DNA is sandwiched between 2 RuvA tetramers; dsDNA enters through RuvA and exits via RuvB. An RuvB hexamer assembles on each DNA strand where it exits the tetramer. Each RuvB hexamer is contacted by two RuvA subunits (via domain III) on 2 adjacent RuvB subunits; this complex drives branch migration. In the full resolvosome a probable DNA-RuvA(4)-RuvB(12)-RuvC(2) complex forms which resolves the HJ.

It localises to the cytoplasm. The enzyme catalyses ATP + H2O = ADP + phosphate + H(+). Its function is as follows. The RuvA-RuvB-RuvC complex processes Holliday junction (HJ) DNA during genetic recombination and DNA repair, while the RuvA-RuvB complex plays an important role in the rescue of blocked DNA replication forks via replication fork reversal (RFR). RuvA specifically binds to HJ cruciform DNA, conferring on it an open structure. The RuvB hexamer acts as an ATP-dependent pump, pulling dsDNA into and through the RuvAB complex. RuvB forms 2 homohexamers on either side of HJ DNA bound by 1 or 2 RuvA tetramers; 4 subunits per hexamer contact DNA at a time. Coordinated motions by a converter formed by DNA-disengaged RuvB subunits stimulates ATP hydrolysis and nucleotide exchange. Immobilization of the converter enables RuvB to convert the ATP-contained energy into a lever motion, pulling 2 nucleotides of DNA out of the RuvA tetramer per ATP hydrolyzed, thus driving DNA branch migration. The RuvB motors rotate together with the DNA substrate, which together with the progressing nucleotide cycle form the mechanistic basis for DNA recombination by continuous HJ branch migration. Branch migration allows RuvC to scan DNA until it finds its consensus sequence, where it cleaves and resolves cruciform DNA. The sequence is that of Holliday junction branch migration complex subunit RuvB from Cupriavidus taiwanensis (strain DSM 17343 / BCRC 17206 / CCUG 44338 / CIP 107171 / LMG 19424 / R1) (Ralstonia taiwanensis (strain LMG 19424)).